The chain runs to 155 residues: 3-hydroxyacyl-[acyl-carrier-protein] dehydratase FabZ (155 aa).

Residue H58 is part of the active site.

The protein belongs to the thioester dehydratase family. FabZ subfamily.

It localises to the cytoplasm. It carries out the reaction a (3R)-hydroxyacyl-[ACP] = a (2E)-enoyl-[ACP] + H2O. Its function is as follows. Involved in unsaturated fatty acids biosynthesis. Catalyzes the dehydration of short chain beta-hydroxyacyl-ACPs and long chain saturated and unsaturated beta-hydroxyacyl-ACPs. The sequence is that of 3-hydroxyacyl-[acyl-carrier-protein] dehydratase FabZ from Alkalilimnicola ehrlichii (strain ATCC BAA-1101 / DSM 17681 / MLHE-1).